Reading from the N-terminus, the 57-residue chain is MDVPLELSAYTRVLRLASTPSWEEFSQIAKIAGAGILLIGAIGFLVFLIMGGIVSVI.

Residues 34–54 form a helical membrane-spanning segment; sequence AGILLIGAIGFLVFLIMGGIV.

It belongs to the SecE/SEC61-gamma family. In terms of assembly, component of the Sec protein translocase complex. Heterotrimer consisting of SecY (alpha), SecG (beta) and SecE (gamma) subunits. The heterotrimers can form oligomers, although 1 heterotrimer is thought to be able to translocate proteins. Interacts with the ribosome. May interact with SecDF, and other proteins may be involved.

The protein localises to the cell membrane. Essential subunit of the Sec protein translocation channel SecYEG. Clamps together the 2 halves of SecY. May contact the channel plug during translocation. The protein is Protein translocase subunit SecE of Halobacterium salinarum (strain ATCC 29341 / DSM 671 / R1).